The sequence spans 215 residues: ATP phosphoribosyltransferase (215 aa).

It belongs to the ATP phosphoribosyltransferase family. Short subfamily. Heteromultimer composed of HisG and HisZ subunits.

Its subcellular location is the cytoplasm. The catalysed reaction is 1-(5-phospho-beta-D-ribosyl)-ATP + diphosphate = 5-phospho-alpha-D-ribose 1-diphosphate + ATP. It participates in amino-acid biosynthesis; L-histidine biosynthesis; L-histidine from 5-phospho-alpha-D-ribose 1-diphosphate: step 1/9. In terms of biological role, catalyzes the condensation of ATP and 5-phosphoribose 1-diphosphate to form N'-(5'-phosphoribosyl)-ATP (PR-ATP). Has a crucial role in the pathway because the rate of histidine biosynthesis seems to be controlled primarily by regulation of HisG enzymatic activity. The sequence is that of ATP phosphoribosyltransferase from Lachnoclostridium phytofermentans (strain ATCC 700394 / DSM 18823 / ISDg) (Clostridium phytofermentans).